The sequence spans 224 residues: 7-cyano-7-deazaguanine synthase (224 aa).

9–19 is a binding site for ATP; sequence ISGGMDSTLCA. 4 residues coordinate Zn(2+): Cys-190, Cys-198, Cys-201, and Cys-204.

This sequence belongs to the QueC family. Zn(2+) serves as cofactor.

It catalyses the reaction 7-carboxy-7-deazaguanine + NH4(+) + ATP = 7-cyano-7-deazaguanine + ADP + phosphate + H2O + H(+). Its pathway is purine metabolism; 7-cyano-7-deazaguanine biosynthesis. Its function is as follows. Catalyzes the ATP-dependent conversion of 7-carboxy-7-deazaguanine (CDG) to 7-cyano-7-deazaguanine (preQ(0)). In Campylobacter jejuni subsp. doylei (strain ATCC BAA-1458 / RM4099 / 269.97), this protein is 7-cyano-7-deazaguanine synthase.